The primary structure comprises 182 residues: Large ribosomal subunit protein uL5 (182 aa).

Belongs to the universal ribosomal protein uL5 family. In terms of assembly, part of the 50S ribosomal subunit; part of the 5S rRNA/L5/L18/L25 subcomplex. Contacts the 5S rRNA and the P site tRNA. Forms a bridge to the 30S subunit in the 70S ribosome.

This is one of the proteins that bind and probably mediate the attachment of the 5S RNA into the large ribosomal subunit, where it forms part of the central protuberance. In the 70S ribosome it contacts protein S13 of the 30S subunit (bridge B1b), connecting the 2 subunits; this bridge is implicated in subunit movement. Contacts the P site tRNA; the 5S rRNA and some of its associated proteins might help stabilize positioning of ribosome-bound tRNAs. The chain is Large ribosomal subunit protein uL5 from Nostoc punctiforme (strain ATCC 29133 / PCC 73102).